Consider the following 578-residue polypeptide: MGCGLNKLEKRDEKRPGNIYSTLKRPQVETKIDVSYEYRFLEFTTLSAAELPGSSAVRLASLRDLPAQLLELYQQGFSLAALHPFVQPTHEREKTPLEHIFRAILIKKTDRSQKTDLHNEGYILELDCCSSLDHPTDQKLIPEFIKKIQEAASQGLKFVGVIPQYHSSVNSAGSSAPVSTANSTEDARDAKNARGDHASLENEKPGTGDVCSAPAGRNQSPEPSSGPRGEVPLAKQPSSPSGEGDGGELSPQGVSKTLDGPESNPLEVHEEPLSGKMEIFTLFNKPKSHQKCRQYYPVTIPLHVSKNGQTVSGLDANWLEHMSDHFRKGGMLVNAVFYLGIVNDSLHGLTDGVFIFEAVSTEDSKTIQGYDAIVVEQWTVLEGVEVQTDYVPLLNSLAAYGWQLTCVLPTPVVKTTSEGSVSTKQIVFLQRPCLPQKIKKKESKFQWRFSREEMHNRQMRKSKGKLSARDKQQAEENEKNLEDQSSKAGDMGNCVSGQQQEGGVSEEMKGPVQEDKGEQLSPGGLLCGVGVEGEAVQNGPASHSRALVGICTGHSNPGEDARDGDAEEVRELGTVEEN.

Glycine 2 carries the N-myristoyl glycine lipid modification. The S-palmitoyl cysteine moiety is linked to residue cysteine 3. The segment covering 169–184 has biased composition (polar residues); the sequence is VNSAGSSAPVSTANST. Disordered regions lie at residues 169-271, 449-525, and 551-578; these read VNSA…VHEE, FSRE…PGGL, and CTGH…VEEN. Phosphoserine occurs at positions 183, 199, and 220. Positions 185-206 are enriched in basic and acidic residues; the sequence is EDARDAKNARGDHASLENEKPG. Residues 457–466 are compositionally biased toward basic residues; the sequence is RQMRKSKGKL. The span at 467 to 485 shows a compositional bias: basic and acidic residues; the sequence is SARDKQQAEENEKNLEDQS. Serine 505 is subject to Phosphoserine. Composition is skewed to basic and acidic residues over residues 506–518 and 557–578; these read EEMK…DKGE and PGED…VEEN.

It belongs to the raftlin family. As to quaternary structure, interacts with TLR4; the interaction occurs in response to lipopolysaccharide stimulation. Interacts with CLTC; the interaction occurs in response to pathogens. Interacts with AP2A1 and AP2B1. In terms of tissue distribution, expressed in B-cells (at protein level). Expressed in dendritic cells and macrophages.

It localises to the cell membrane. Its subcellular location is the cytoplasm. The protein localises to the membrane raft. It is found in the endosome. The protein resides in the early endosome. Its function is as follows. Involved in protein trafficking via association with clathrin and AP2 complex. Upon bacterial lipopolysaccharide stimulation, mediates internalization of TLR4 to endosomes in dendritic cells and macrophages; and internalization of poly(I:C) to TLR3-positive endosomes in myeloid dendritic cells and epithelial cells; resulting in activation of TICAM1-mediated signaling and subsequent IFNB1 production. Involved in T-cell antigen receptor-mediated signaling by regulating tyrosine kinase LCK localization, T-cell dependent antibody production and cytokine secretion. May regulate B-cell antigen receptor-mediated signaling. May play a pivotal role in the formation and/or maintenance of lipid rafts. The protein is Raftlin (RFTN1) of Homo sapiens (Human).